Consider the following 72-residue polypeptide: Small proline-rich protein 2A (72 aa).

Residues 1-11 (MSYQQQQCKQP) show a composition bias toward low complexity. Residues 1–20 (MSYQQQQCKQPCQPPPVCPT) are disordered. A run of 3 repeats spans residues 21–29 (PKCPEPCPP), 30–38 (PKCPEPCPP), and 39–47 (PKCPQPCPP). Residues 21–47 (PKCPEPCPPPKCPEPCPPPKCPQPCPP) are 3 X 9 AA tandem repeats of P-K-C-P-[EQ]-P-C-P-P. The segment at 42 to 72 (PQPCPPQQCQQKYPPVTPSPPCQSKYPPKSK) is disordered.

The protein belongs to the cornifin (SPRR) family. Post-translationally, forms five pairs of intrachain disulfide bonds. Expressed in intestine; selectively expressed in goblet cells.

The protein localises to the secreted. It is found in the extracellular space. The protein resides in the cytoplasmic vesicle. It localises to the secretory vesicle. Functionally, gut bactericidal protein that selectively kills Gram-positive bacteria by binding to negatively charged lipids on bacterial membranes, leading to bacterial membrane permeabilization and disruption. Specifically binds lipids bearing negatively charged headgroups, such as phosphatidic acid, phosphatidylserine (PS), cardiolipin (CL), and phosphatidylinositol phosphates, but not to zwitterionic or neutral lipids. Induced by type-2 cytokines in response to helminth infection and is required to protect against helminth-induced bacterial invasion of intestinal tissue. May also be involved in the development of the cornified envelope of squamous epithelia; however, additional evidences are required to confirm this result in vivo. This Homo sapiens (Human) protein is Small proline-rich protein 2A.